Here is a 174-residue protein sequence, read N- to C-terminus: Protein C (174 aa).

Belongs to the morbillivirus protein C family.

This chain is Protein C (P/V/C), found in Phocine distemper virus (PDV).